Here is a 429-residue protein sequence, read N- to C-terminus: 4-hydroxyphenylacetate degradation bifunctional isomerase/decarboxylase (429 aa).

2 Approximate repeats span residues 1–215 (MKGT…NQTF) and 216–429 (TWPL…ESAN). Glu-276, Glu-278, and Asp-307 together coordinate a divalent metal cation.

Belongs to the FAH family. In terms of assembly, monomer. Mg(2+) serves as cofactor.

The enzyme catalyses (2E,4Z)-5-hydroxypenta-2,4-diene-1,2,5-tricarboxylate = (3E,5R)-5-carboxy-2-oxohept-3-enedioate. It catalyses the reaction (3E,5R)-5-carboxy-2-oxohept-3-enedioate + H(+) = (4Z)-2-oxohept-4-enedioate + CO2. It participates in aromatic compound metabolism; 4-hydroxyphenylacetate degradation; pyruvate and succinate semialdehyde from 4-hydroxyphenylacetate: step 4/7. The protein operates within aromatic compound metabolism; 4-hydroxyphenylacetate degradation; pyruvate and succinate semialdehyde from 4-hydroxyphenylacetate: step 5/7. Functionally, decarboxylates OPET (5-oxo-pent-3-ene-1,2,5-tricarboxylic acid) into HHDD (2-hydroxy-hept-2,4-diene-1,7-dioate) and isomerizes it to OHED (2-oxo-hept-3-ene-1,7-dioate). This chain is 4-hydroxyphenylacetate degradation bifunctional isomerase/decarboxylase (hpaG), found in Salmonella dublin.